The chain runs to 758 residues: 5-methyltetrahydropteroyltriglutamate--homocysteine methyltransferase (758 aa).

5-methyltetrahydropteroyltri-L-glutamate-binding positions include 16–19 (RELK) and Lys-112. L-homocysteine is bound by residues 433-435 (IGS) and Glu-486. Residues 433–435 (IGS) and Glu-486 contribute to the L-methionine site. 5-methyltetrahydropteroyltri-L-glutamate is bound by residues 517–518 (RC) and Trp-563. L-homocysteine is bound at residue Asp-601. Asp-601 contributes to the L-methionine binding site. Glu-607 is a binding site for 5-methyltetrahydropteroyltri-L-glutamate. Zn(2+)-binding residues include His-643, Cys-645, and Glu-667. The Proton donor role is filled by His-696. Cys-728 is a Zn(2+) binding site.

Belongs to the vitamin-B12 independent methionine synthase family. It depends on Zn(2+) as a cofactor.

It carries out the reaction 5-methyltetrahydropteroyltri-L-glutamate + L-homocysteine = tetrahydropteroyltri-L-glutamate + L-methionine. It participates in amino-acid biosynthesis; L-methionine biosynthesis via de novo pathway; L-methionine from L-homocysteine (MetE route): step 1/1. In terms of biological role, catalyzes the transfer of a methyl group from 5-methyltetrahydrofolate to homocysteine resulting in methionine formation. This chain is 5-methyltetrahydropteroyltriglutamate--homocysteine methyltransferase, found in Neisseria meningitidis serogroup A / serotype 4A (strain DSM 15465 / Z2491).